Consider the following 119-residue polypeptide: MARVKKGVTARKRHKKVLKLAKGFRGARSKLFRPANQFVMKALRHAYVGRKLRKRDFRRLWITRINAATRINGLSYSKFISGLKLSGIEMNRKVLSEMAIHDKEGFAQLVETAKQKLNA.

The protein belongs to the bacterial ribosomal protein bL20 family.

Functionally, binds directly to 23S ribosomal RNA and is necessary for the in vitro assembly process of the 50S ribosomal subunit. It is not involved in the protein synthesizing functions of that subunit. The chain is Large ribosomal subunit protein bL20 from Alkaliphilus metalliredigens (strain QYMF).